Consider the following 364-residue polypeptide: Probable mannose-1-phosphate guanylyltransferase 2 (364 aa).

GDP-alpha-D-mannose-binding residues include leucine 6 and valine 7. Diphosphate-binding residues include glycine 9, glycine 11, threonine 12, arginine 13, and lysine 23. Glycine 88, asparagine 112, aspartate 114, glycine 149, and asparagine 176 together coordinate GDP-alpha-D-mannose.

The protein belongs to the transferase hexapeptide repeat family.

The enzyme catalyses alpha-D-mannose 1-phosphate + GTP + H(+) = GDP-alpha-D-mannose + diphosphate. It functions in the pathway nucleotide-sugar biosynthesis; GDP-alpha-D-mannose biosynthesis; GDP-alpha-D-mannose from alpha-D-mannose 1-phosphate (GTP route): step 1/1. Catalyzes a reaction of the Smirnoff-Wheeler pathway, the major route to ascorbate biosynthesis in plants. This chain is Probable mannose-1-phosphate guanylyltransferase 2, found in Arabidopsis thaliana (Mouse-ear cress).